The following is a 204-amino-acid chain: Glutathione S-transferase GST-4.5 (204 aa).

Residues 1–77 (MKLYTKPGAC…YIADTAPLTG (77 aa)) form the GST N-terminal domain. Glutathione-binding positions include Cys10, Val49, 61–62 (QN), and His102. Residues 83 to 204 (TARSRAEINR…QAALQAEGLN (122 aa)) enclose the GST C-terminal domain.

It belongs to the GST superfamily. As to quaternary structure, homodimer.

Its subcellular location is the cytoplasm. The enzyme catalyses RX + glutathione = an S-substituted glutathione + a halide anion + H(+). Conjugation of reduced glutathione to a wide number of exogenous and endogenous hydrophobic electrophiles. The protein is Glutathione S-transferase GST-4.5 (gst) of Xanthomonas campestris pv. campestris (strain ATCC 33913 / DSM 3586 / NCPPB 528 / LMG 568 / P 25).